The following is a 353-amino-acid chain: MDNVAQLETDTNFQSRKKITWGVFSVLLLFLVAGILYYFFVYRFYQSTDNAYVQADVTWVMPKISGEVMELLINDNQVVKKGETLAVLDHRDYQARYDQARSVVSLKEAALGVQQQNEKSARSSIIEANSGVVAAQADLARLKKEFERYQDLLKDGVITRQNFEGIQSQYLTAQAQLSKAQAAVNAAEAQLGSLQASRAQLLADIQSSHANLNLYQVDLASSKVVSPVSGKIGSLAIQKGSRVSPQTRLMAIIPENSLYVQANFKETQIEKMHIGQKVKLKLDAYPSLNFTGKIESFSPASGATFSLMPPDNATGNFNKVVQRIPVRIAIDSSPHIDLVKPGMSVSATVDLRT.

The chain crosses the membrane as a helical span at residues 21 to 41 (WGVFSVLLLFLVAGILYYFFV). Positions 132-204 (VVAAQADLAR…QASRAQLLAD (73 aa)) form a coiled coil.

The protein belongs to the membrane fusion protein (MFP) (TC 8.A.1) family.

It localises to the cell inner membrane. Its function is as follows. Probably part of an efflux pump system that contributes to adaptation to osmotic stress and resistance to colistin. This Acinetobacter baumannii (strain ATCC 17978 / DSM 105126 / CIP 53.77 / LMG 1025 / NCDC KC755 / 5377) protein is Colistin resistance protein EmrA.